A 408-amino-acid chain; its full sequence is MAKITKVSPLAPAAFPTLPVIDGVRLASIAAGVRYQGRTDVMLAVLDPGTSVAGVFTRSATRSAPVLDCQAKIGGASDGPAAILVNSGNSNAFTGHYGQTSVAEVTQAVADVTGVPVGRVFTSSTGVIGEPMKHERIVAKLGDLNAALSPDALEDAARAIMTTDTFAKGASRTVGIDGKMVKIAGIAKGSGMIAPDMATMLVYIFTDARVEQGALQAMLSAMTDKTFNCITVDSDTSTSDTLLLCATGASGVDAEGNAEFAAALEAVMLDLAQQVVRDGEGATKFVEIRVTGAANDVDAKVHGLAIANSPLVKTAIAGEDPNWGRVVMAIGKSGAAADRDLLSISFGDILVAEKGWVSPNYREEDAAAYMKGQDLVIGVDLGLGAGKSTVWTCDLTHGYIEINADYRS.

Substrate-binding residues include Thr162, Lys188, Thr199, Glu280, Asn403, and Ser408. Thr199 (nucleophile) is an active-site residue.

This sequence belongs to the ArgJ family. As to quaternary structure, heterotetramer of two alpha and two beta chains.

Its subcellular location is the cytoplasm. The enzyme catalyses N(2)-acetyl-L-ornithine + L-glutamate = N-acetyl-L-glutamate + L-ornithine. The catalysed reaction is L-glutamate + acetyl-CoA = N-acetyl-L-glutamate + CoA + H(+). It functions in the pathway amino-acid biosynthesis; L-arginine biosynthesis; L-ornithine and N-acetyl-L-glutamate from L-glutamate and N(2)-acetyl-L-ornithine (cyclic): step 1/1. It participates in amino-acid biosynthesis; L-arginine biosynthesis; N(2)-acetyl-L-ornithine from L-glutamate: step 1/4. Its function is as follows. Catalyzes two activities which are involved in the cyclic version of arginine biosynthesis: the synthesis of N-acetylglutamate from glutamate and acetyl-CoA as the acetyl donor, and of ornithine by transacetylation between N(2)-acetylornithine and glutamate. This chain is Arginine biosynthesis bifunctional protein ArgJ, found in Ruegeria pomeroyi (strain ATCC 700808 / DSM 15171 / DSS-3) (Silicibacter pomeroyi).